A 532-amino-acid chain; its full sequence is Flavin-containing monooxygenase 1 (532 aa).

At 1–510 (MVKRVAIVGA…TRTVQETPST (510 aa)) the chain is on the lumenal side. FAD-binding positions include 9–13 (GAGVS), Glu32, 40–41 (LW), and 61–62 (NS). NADP(+)-binding positions include 60-61 (SN) and 195-198 (SGTD). Residues 511 to 531 (FETLLKLFSFLALLVAVFFIF) form a helical membrane-spanning segment. A topological domain (cytoplasmic) is located at residue Leu532.

This sequence belongs to the FMO family. FAD is required as a cofactor. As to expression, expressed in liver, lung and kidney and to a lesser extent in the heart and brain.

The protein localises to the endoplasmic reticulum membrane. The catalysed reaction is hypotaurine + NADPH + O2 + H(+) = taurine + NADP(+) + H2O. It carries out the reaction hypotaurine + NADH + O2 + H(+) = taurine + NAD(+) + H2O. It catalyses the reaction trimethylamine + NADPH + O2 = trimethylamine N-oxide + NADP(+) + H2O. The enzyme catalyses N,N-dimethylaniline + NADPH + O2 + H(+) = N,N-dimethylaniline N-oxide + NADP(+) + H2O. Functionally, broad spectrum monooxygenase that catalyzes the oxygenation of a wide variety of nitrogen- and sulfur-containing compounds including xenobiotics. Catalyzes the S-oxygenation of hypotaurine to produce taurine, an organic osmolyte involved in cell volume regulation as well as a variety of cytoprotective and developmental processes. In vitro, catalyzes the N-oxygenation of trimethylamine (TMA) to produce trimethylamine N-oxide (TMAO) and could therefore participate to the detoxification of this compound that is generated by the action of gut microbiota from dietary precursors such as choline, choline containing compounds, betaine or L-carnitine. This is Flavin-containing monooxygenase 1 from Rattus norvegicus (Rat).